Consider the following 393-residue polypeptide: tRNA(Met) cytidine acetate ligase (393 aa).

Residues glycine 81, asparagine 142, and arginine 167 each contribute to the ATP site.

Belongs to the TmcAL family.

The protein localises to the cytoplasm. It catalyses the reaction cytidine(34) in elongator tRNA(Met) + acetate + ATP = N(4)-acetylcytidine(34) in elongator tRNA(Met) + AMP + diphosphate. Functionally, catalyzes the formation of N(4)-acetylcytidine (ac(4)C) at the wobble position of elongator tRNA(Met), using acetate and ATP as substrates. First activates an acetate ion to form acetyladenylate (Ac-AMP) and then transfers the acetyl group to tRNA to form ac(4)C34. The polypeptide is tRNA(Met) cytidine acetate ligase (Bacillus cereus (strain ATCC 14579 / DSM 31 / CCUG 7414 / JCM 2152 / NBRC 15305 / NCIMB 9373 / NCTC 2599 / NRRL B-3711)).